Consider the following 205-residue polypeptide: Variable small protein 11 (205 aa).

The N-terminal stretch at methionine 1 to serine 18 is a signal peptide. Cysteine 19 is lipidated: N-palmitoyl cysteine. Cysteine 19 carries the S-diacylglycerol cysteine lipid modification.

Belongs to the variable small protein (Vsp) family.

The protein resides in the cell outer membrane. In terms of biological role, the Vlp and Vsp proteins are antigenically distinct proteins, only one vlp or vsp gene is transcriptionally active at any one time. Switching between these genes is a mechanism of host immune response evasion. In Borrelia hermsii, this protein is Variable small protein 11.